A 227-amino-acid polypeptide reads, in one-letter code: Cytochrome c oxidase subunit 2 (227 aa).

Residues 1–14 lie on the Mitochondrial intermembrane side of the membrane; that stretch reads MAYPLQLGFQDASS. Residues 15 to 45 form a helical membrane-spanning segment; the sequence is PIMEELLHFHDHTLMIVFLISSLVLYIISLM. Over 46–59 the chain is Mitochondrial matrix; that stretch reads LTTKLTHTSTMDAQ. A helical membrane pass occupies residues 60–87; that stretch reads EVETIWTILPAIILILIALPSLRILYMM. Topologically, residues 88–227 are mitochondrial intermembrane; that stretch reads DEINNPSLTV…HFENWTTTML (140 aa). Residues histidine 161, cysteine 196, glutamate 198, cysteine 200, histidine 204, and methionine 207 each coordinate Cu cation. Glutamate 198 lines the Mg(2+) pocket.

Belongs to the cytochrome c oxidase subunit 2 family. Component of the cytochrome c oxidase (complex IV, CIV), a multisubunit enzyme composed of 14 subunits. The complex is composed of a catalytic core of 3 subunits MT-CO1, MT-CO2 and MT-CO3, encoded in the mitochondrial DNA, and 11 supernumerary subunits COX4I, COX5A, COX5B, COX6A, COX6B, COX6C, COX7A, COX7B, COX7C, COX8 and NDUFA4, which are encoded in the nuclear genome. The complex exists as a monomer or a dimer and forms supercomplexes (SCs) in the inner mitochondrial membrane with NADH-ubiquinone oxidoreductase (complex I, CI) and ubiquinol-cytochrome c oxidoreductase (cytochrome b-c1 complex, complex III, CIII), resulting in different assemblies (supercomplex SCI(1)III(2)IV(1) and megacomplex MCI(2)III(2)IV(2)). Found in a complex with TMEM177, COA6, COX18, COX20, SCO1 and SCO2. Interacts with TMEM177 in a COX20-dependent manner. Interacts with COX20. Interacts with COX16. Cu cation serves as cofactor.

It localises to the mitochondrion inner membrane. The enzyme catalyses 4 Fe(II)-[cytochrome c] + O2 + 8 H(+)(in) = 4 Fe(III)-[cytochrome c] + 2 H2O + 4 H(+)(out). Component of the cytochrome c oxidase, the last enzyme in the mitochondrial electron transport chain which drives oxidative phosphorylation. The respiratory chain contains 3 multisubunit complexes succinate dehydrogenase (complex II, CII), ubiquinol-cytochrome c oxidoreductase (cytochrome b-c1 complex, complex III, CIII) and cytochrome c oxidase (complex IV, CIV), that cooperate to transfer electrons derived from NADH and succinate to molecular oxygen, creating an electrochemical gradient over the inner membrane that drives transmembrane transport and the ATP synthase. Cytochrome c oxidase is the component of the respiratory chain that catalyzes the reduction of oxygen to water. Electrons originating from reduced cytochrome c in the intermembrane space (IMS) are transferred via the dinuclear copper A center (CU(A)) of subunit 2 and heme A of subunit 1 to the active site in subunit 1, a binuclear center (BNC) formed by heme A3 and copper B (CU(B)). The BNC reduces molecular oxygen to 2 water molecules using 4 electrons from cytochrome c in the IMS and 4 protons from the mitochondrial matrix. This is Cytochrome c oxidase subunit 2 (MT-CO2) from Tupaia glis (Common tree shrew).